A 363-amino-acid chain; its full sequence is Dihydroorotate dehydrogenase (quinone) (363 aa).

FMN-binding positions include 70 to 74 and T94; that span reads AGFDK. Residue K74 participates in substrate binding. A substrate-binding site is contributed by 119–123; that stretch reads NRMGF. FMN-binding residues include N147 and N180. Residue N180 coordinates substrate. S183 functions as the Nucleophile in the catalytic mechanism. N185 is a substrate binding site. K216 and T244 together coordinate FMN. 245-246 contributes to the substrate binding site; it reads NT. FMN-binding positions include G270, G299, and 320 to 321; that span reads YT.

This sequence belongs to the dihydroorotate dehydrogenase family. Type 2 subfamily. As to quaternary structure, monomer. FMN is required as a cofactor.

It localises to the cell membrane. The enzyme catalyses (S)-dihydroorotate + a quinone = orotate + a quinol. It functions in the pathway pyrimidine metabolism; UMP biosynthesis via de novo pathway; orotate from (S)-dihydroorotate (quinone route): step 1/1. In terms of biological role, catalyzes the conversion of dihydroorotate to orotate with quinone as electron acceptor. The protein is Dihydroorotate dehydrogenase (quinone) of Corynebacterium diphtheriae (strain ATCC 700971 / NCTC 13129 / Biotype gravis).